The following is a 101-amino-acid chain: Albumin (101 aa).

Albumin domains follow at residues 1–80 (DAEH…AFXY) and 81–101 (ESGAVLVSYPEMVGCCPPDVL). His4 contributes to the Cu cation binding site.

The protein belongs to the ALB/AFP/VDB family. In terms of tissue distribution, plasma.

It localises to the secreted. Its function is as follows. Binds water, Ca(2+), Na(+), K(+), fatty acids, hormones, bilirubin and drugs. Its main function is the regulation of the colloidal osmotic pressure of blood. The polypeptide is Albumin (alb) (Neoceratodus forsteri (Australian lungfish)).